The following is an 88-amino-acid chain: MDGFDKTMKFSIQDEKQSVHVNDVLLTVYDALQEKGYNPINQIVGYLLSGDPAYIPRHKDARSIVRKLERDEIIEELVKSYLKHHREE.

It belongs to the UPF0297 family.

This Bacillus mycoides (strain KBAB4) (Bacillus weihenstephanensis) protein is UPF0297 protein BcerKBAB4_4234.